The following is a 66-amino-acid chain: Large ribosomal subunit protein uL29 (66 aa).

It belongs to the universal ribosomal protein uL29 family.

The sequence is that of Large ribosomal subunit protein uL29 from Borrelia hermsii (strain HS1 / DAH).